Consider the following 129-residue polypeptide: Small ribosomal subunit protein bS6 (129 aa).

The disordered stretch occupies residues 100-129 (SIMLKQKEERAPRREERSEAKPEAKSEAAE). The span at 104–129 (KQKEERAPRREERSEAKPEAKSEAAE) shows a compositional bias: basic and acidic residues.

Belongs to the bacterial ribosomal protein bS6 family.

In terms of biological role, binds together with bS18 to 16S ribosomal RNA. The sequence is that of Small ribosomal subunit protein bS6 from Vibrio parahaemolyticus serotype O3:K6 (strain RIMD 2210633).